Here is a 389-residue protein sequence, read N- to C-terminus: Putative nickel insertion protein (389 aa).

It belongs to the LarC family.

The protein is Putative nickel insertion protein of Desulfotalea psychrophila (strain LSv54 / DSM 12343).